A 180-amino-acid chain; its full sequence is Oligoribonuclease (180 aa).

The region spanning 7–170 is the Exonuclease domain; the sequence is LIWIDLEMTG…DDIRESIAEL (164 aa). Tyrosine 128 is an active-site residue.

The protein belongs to the oligoribonuclease family.

The protein resides in the cytoplasm. In terms of biological role, 3'-to-5' exoribonuclease specific for small oligoribonucleotides. This is Oligoribonuclease from Ectopseudomonas mendocina (strain ymp) (Pseudomonas mendocina).